The chain runs to 237 residues: MSNAYKRVLLKLSGEALMGDDAFGINRATIERMVADIAEVVRLGTQLAVVIGGGNIFRGVAGGAAGMDRATADYMGMLATMMNALALQDAMRHAGIEARVQSALRMDQVVEPYIRPRAIRQLEEGRVVIFAAGTGNPFFTTDTAAALRGSEVGAEVVLKATKVDGVYSADPKKDPSATRYTTISFDEAISRNLQVMDATAFALCRDQKLPIRVFSINKPGALKRIVLGEDEGTLVHV.

11–14 (KLSG) is an ATP binding site. UMP is bound at residue Gly53. Gly54 and Arg58 together coordinate ATP. UMP-binding positions include Asp73 and 134-141 (TGNPFFTT). The ATP site is built by Thr161, Tyr167, and Asp170.

This sequence belongs to the UMP kinase family. As to quaternary structure, homohexamer.

The protein resides in the cytoplasm. The enzyme catalyses UMP + ATP = UDP + ADP. It functions in the pathway pyrimidine metabolism; CTP biosynthesis via de novo pathway; UDP from UMP (UMPK route): step 1/1. Inhibited by UTP. Catalyzes the reversible phosphorylation of UMP to UDP. This Burkholderia cenocepacia (strain HI2424) protein is Uridylate kinase.